The primary structure comprises 156 residues: Ribonuclease P protein component (156 aa).

The interval 126–156 is disordered; the sequence is GLRKLGVTPGGGRSPAPRAHSGARPRTDARS.

The protein belongs to the RnpA family. Consists of a catalytic RNA component (M1 or rnpB) and a protein subunit.

The catalysed reaction is Endonucleolytic cleavage of RNA, removing 5'-extranucleotides from tRNA precursor.. In terms of biological role, RNaseP catalyzes the removal of the 5'-leader sequence from pre-tRNA to produce the mature 5'-terminus. It can also cleave other RNA substrates such as 4.5S RNA. The protein component plays an auxiliary but essential role in vivo by binding to the 5'-leader sequence and broadening the substrate specificity of the ribozyme. The protein is Ribonuclease P protein component of Nocardia farcinica (strain IFM 10152).